Here is a 412-residue protein sequence, read N- to C-terminus: Tryptophan synthase beta chain 1 (412 aa).

K103 bears the N6-(pyridoxal phosphate)lysine mark.

The protein belongs to the TrpB family. Tetramer of two alpha and two beta chains. It depends on pyridoxal 5'-phosphate as a cofactor.

The enzyme catalyses (1S,2R)-1-C-(indol-3-yl)glycerol 3-phosphate + L-serine = D-glyceraldehyde 3-phosphate + L-tryptophan + H2O. The protein operates within amino-acid biosynthesis; L-tryptophan biosynthesis; L-tryptophan from chorismate: step 5/5. Its function is as follows. The beta subunit is responsible for the synthesis of L-tryptophan from indole and L-serine. The sequence is that of Tryptophan synthase beta chain 1 (trpB1) from Chlamydia caviae (strain ATCC VR-813 / DSM 19441 / 03DC25 / GPIC) (Chlamydophila caviae).